A 313-amino-acid polypeptide reads, in one-letter code: GMP synthase [glutamine-hydrolyzing] subunit B (313 aa).

The 185-residue stretch at 6–190 (KVWEKFIEEK…LGLPEKIYNR (185 aa)) folds into the GMPS ATP-PPase domain. ATP is bound at residue 33–39 (SGGVDSS).

In terms of assembly, heterodimer composed of a glutamine amidotransferase subunit (A) and a GMP-binding subunit (B).

The enzyme catalyses XMP + L-glutamine + ATP + H2O = GMP + L-glutamate + AMP + diphosphate + 2 H(+). It functions in the pathway purine metabolism; GMP biosynthesis; GMP from XMP (L-Gln route): step 1/1. Its function is as follows. Catalyzes the synthesis of GMP from XMP. The chain is GMP synthase [glutamine-hydrolyzing] subunit B (guaAB) from Pyrococcus furiosus (strain ATCC 43587 / DSM 3638 / JCM 8422 / Vc1).